A 222-amino-acid polypeptide reads, in one-letter code: MKKFLPGLLLMGLVACSSNQRMSDYSQPESQSDLAPKSSTTQFQPQPLLSKASSMPLNLLSSSKNGQVSPSEPSNFMTLMGQNGALLTVWALAKRNWLWAYPNIYSQDFGNIRNWKIEPGKHREYFRFVNQSLGTCIEAYGNGLIHDTCSLDKLAQEFELLPTDSGAVVIKSVSQGRCVTYNPVSPTYYSTVTLSTCDGATEPLRDQTWYLAPPVLEATAVN.

The signal sequence occupies residues 1–15; the sequence is MKKFLPGLLLMGLVA. Residue cysteine 16 is the site of N-palmitoyl cysteine attachment. The S-diacylglycerol cysteine moiety is linked to residue cysteine 16. Positions 22-44 are disordered; that stretch reads MSDYSQPESQSDLAPKSSTTQFQ. Residues 90–101 form a mediates binding to target cells region; that stretch reads WALAKRNWLWAY. The 90-residue stretch at 122-211 folds into the Ricin B-type lectin domain; sequence HREYFRFVNQ…EPLRDQTWYL (90 aa).

As to quaternary structure, heterotrimer of 3 subunits, CdtA, CdtB and CdtC. May form higher oligomers.

It localises to the cell outer membrane. In terms of biological role, CDTs are cytotoxins which induce host cell distension, growth arrest in G2/M phase, nucleus swelling, and chromatin fragmentation in HeLa cells. In Aggregatibacter actinomycetemcomitans (Actinobacillus actinomycetemcomitans), this protein is Cytolethal distending toxin subunit A (cdtA).